The sequence spans 2397 residues: Cell wall alpha-1,3-glucan synthase mok11 (2397 aa).

The interval S1683–V1705 is disordered. Residues S1687–F1698 show a composition bias toward low complexity.

It belongs to the glycosyltransferase group 1 family.

The catalysed reaction is [(1-&gt;3)-alpha-D-glucosyl](n) + UDP-alpha-D-glucose = [(1-&gt;3)-alpha-D-glucosyl](n+1) + UDP + H(+). The chain is Cell wall alpha-1,3-glucan synthase mok11 (mok11) from Schizosaccharomyces pombe (strain 972 / ATCC 24843) (Fission yeast).